Reading from the N-terminus, the 1005-residue chain is Sorbin and SH3 domain-containing protein 1 homolog (1005 aa).

Disordered stretches follow at residues 1-31 (MMHH…PAAD), 61-86 (LDMK…STPS), 99-153 (YVDP…PHSA), 243-292 (NELK…FNSE), 386-409 (FEEK…FKND), 427-475 (TTKN…TAAA), and 542-622 (MHRK…SNEE). The segment covering 11–25 (NLANSSEPQQPSGQY) has biased composition (polar residues). Residues 260-269 (VMTSSTENLK) show a composition bias toward polar residues. Low complexity predominate over residues 270-279 (NGNNQQNQQP). A compositionally biased stretch (polar residues) spans 392–409 (RSPMTSTPSYKEQGFKND). Low complexity predominate over residues 448-475 (SDTYPVSSSTTSTWPSHTTTPTTTTAAA). Positions 499–567 (VMSTNMDEPI…FINPSNVTDG (69 aa)) constitute a SoHo domain. Residues 544-557 (RKGEDGSNEGKEQH) show a composition bias toward basic and acidic residues. The segment covering 559-589 (INPSNVTDGIGRTTPTASNLGRSRENLSFNQ) has biased composition (polar residues). Residues 610 to 642 (YNNQERVKQSNEEELLRLKAEKLAEELRKEKER) are a coiled coil. SH3 domains lie at 683 to 742 (QPVM…INTG), 745 to 805 (GDSQ…PIEQ), and 946 to 1005 (KGSE…VKRH).

In terms of assembly, may interact with deb-1. In terms of tissue distribution, expressed in body wall muscles, muscle arm attachment sites at the nerve ring, all non-striated muscles, and distal tip cells of the gonad. Highly expressed in the origins and insertions of the vulval and anal depressor muscles and the spicule-associated and diagonal muscles of the male tail. Expressed in small puncta throughout the uterus, stomatointestinal muscle and proximal gonadal sheath tissues. Not expressed in the pharynx.

The protein localises to the cell junction. The protein resides in the adherens junction. It localises to the cell membrane. Its subcellular location is the focal adhesion. Required for organization of sarcomeres in body wall muscles and for maintaining normal mitochondrial position in myocytes. The protein is Sorbin and SH3 domain-containing protein 1 homolog of Caenorhabditis elegans.